We begin with the raw amino-acid sequence, 271 residues long: Aquaporin-2 (271 aa).

Residues 1 to 11 (MWELRSIAFSR) are Cytoplasmic-facing. The helical transmembrane segment at 12–32 (AVLAEFLATLLFVFFGLGSAL) threads the bilayer. Residues 33–40 (QWASSPPS) are Extracellular-facing. Residues 41–59 (VLQIAVAFGLGIGILVQAL) form a helical membrane-spanning segment. At 60–64 (GHVSG) the chain is on the cytoplasmic side. Positions 65-74 (AHINPAVTVA) form an intramembrane region, discontinuously helical. The NPA 1 motif lies at 68 to 70 (NPA). Residues 75-85 (CLVGCHVSFLR) are Cytoplasmic-facing. Residues 86 to 107 (AAFYVAAQLLGAVAGAAILHEI) form a helical membrane-spanning segment. Residues 108–127 (TPVEIRGDLAVNALHNNATA) are Extracellular-facing. Asn-124 carries N-linked (GlcNAc...) asparagine glycosylation. Residues 128 to 148 (GQAVTVELFLTMQLVLCIFAS) form a helical membrane-spanning segment. The Cytoplasmic segment spans residues 149 to 156 (TDERRGDN). The chain crosses the membrane as a helical span at residues 157 to 176 (LGSPALSIGFSVTLGHLLGI). The Extracellular segment spans residues 177 to 180 (YFTG). Positions 181-193 (CSMNPARSLAPAV) form an intramembrane region, discontinuously helical. The NPA 2 motif lies at 184-186 (NPA). Topologically, residues 194–201 (VTGKFDDH) are extracellular. A helical transmembrane segment spans residues 202–222 (WVFWIGPLVGAIIGSLLYNYL). Residues 223–271 (LFPSAKSLQERLAVLKGLEPDTDWEEREVRRRQSVELHSPQSLPRGSKA) are Cytoplasmic-facing. Residues 251–271 (VRRRQSVELHSPQSLPRGSKA) form a disordered region. 4 positions are modified to phosphoserine: Ser-256, Ser-261, Ser-264, and Ser-269. Residues 261–271 (SPQSLPRGSKA) are compositionally biased toward polar residues.

Belongs to the MIP/aquaporin (TC 1.A.8) family. As to quaternary structure, homotetramer. Ser-256 phosphorylation is necessary and sufficient for expression at the apical membrane. Endocytosis is not phosphorylation-dependent. In terms of processing, N-glycosylated. Detected in kidney, in cortical and the medullary collecting tubules (at protein level). Detected in kidney medulla and cortex.

It localises to the apical cell membrane. It is found in the basolateral cell membrane. The protein resides in the cell membrane. The protein localises to the cytoplasmic vesicle membrane. Its subcellular location is the golgi apparatus. It localises to the trans-Golgi network membrane. It catalyses the reaction H2O(in) = H2O(out). The enzyme catalyses glycerol(in) = glycerol(out). In terms of biological role, forms a water-specific channel that provides the plasma membranes of renal collecting duct with high permeability to water, thereby permitting water to move in the direction of an osmotic gradient. Plays an essential role in renal water homeostasis. Could also be permeable to glycerol. This Rattus norvegicus (Rat) protein is Aquaporin-2.